The chain runs to 536 residues: Caspase recruitment domain-containing protein 9 (536 aa).

A Phosphoserine modification is found at S2. Residues D3, C10, and H73 each coordinate Zn(2+). The CARD domain occupies 6–98 (NDDECWSVLE…QLYKKVTGKE (93 aa)). The interval 99-116 (PARVFSMIIDASGESGLT) is linker. Coiled-coil stretches lie at residues 117–277 (QLLM…DRSS) and 332–419 (LRKD…QQLE). K125 is covalently cross-linked (Glycyl lysine isopeptide (Lys-Gly) (interchain with G-Cter in ubiquitin)). At T231 the chain carries Phosphothreonine. Residue S277 is modified to Phosphoserine. Phosphoserine is present on residues S424, S425, S431, S450, S460, S483, and S498. The disordered stretch occupies residues 427–536 (LEDGSPRRSQ…GSDNTDTEGS (110 aa)). Over residues 487–502 (PPEKERRRLKESFENY) the composition is skewed to basic and acidic residues. Basic residues predominate over residues 503 to 513 (RRKRALRKMQK). Phosphothreonine; by CK2 occurs at positions 531 and 533.

Monomer. Homodimer; homodimerization is mediated by the CARD domain which forms an extensive interaction with the adjacent linker and coiled-coil regions; leads to an autoinhibited state. Homomultimer; polymerizes following activation, forming a nucleating helical template that seeds BCL10-filament formation via a CARD-CARD interaction. Interacts (via CARD domain) with BCL10 (via CARD domain); interaction takes place following CARD9 activation and polymerization, leading to the formation of a filamentous CBM complex assembly. Component of a CBM complex (CARD9-BCL10, MALT1), composed of CARD9, BCL10 and MALT1. Interacts with RASGRF1. Interacts with NOD2 (via NACHT domain); interaction is direct. Interacts with RIPK2. Interacts with VHL; without leading to protein degradation. In terms of processing, phosphorylated at Thr-231 by PRKCD downstream of C-type lectin receptors activation: phosphorylation promotes interaction with BCL10, followed by activation of NF-kappa-B and MAP kinase p38 pathways. Phosphorylated at Thr-531 and Thr-533 by CK2 following interaction with VHL, leading to inhibit the ability to activate NF-kappa-B. Ubiquitinated at Lys-125 via 'Lys-27'-linked ubiquitin by TRIM62 downstream of C-type lectin receptors activation; leading to CARD9 activation, followed by activation of NF-kappa-B and MAP kinase p38 pathways. Deubiquitinated at Lys-125 by USP15, inhibiting CARD9. Expression is restricted to several populations of phagocytes, such as macrophages, monocytes, and dendritic cells. Highly expressed in spleen. Also detected in liver, placenta, lung, peripheral blood leukocytes and in brain.

Its subcellular location is the cytoplasm. With respect to regulation, maintained in an autoinhibited state via homodimerization in which the CARD domain forms an extensive interaction with the adjacent linker and coiled-coil regions. Activation downstream of C-type lectin receptors, by phosphorylation by PRKCD and/or ubiquitination by TRIM62, triggers disruption of the CARD domain-coiled coil interface, CARD9 homooligomerization and BCL10 recruitment, followed by activation of NF-kappa-B and MAP kinase p38 pathways. Zinc-binding inhibits activation by stabilizing the CARD ground-state conformation and restricting its capacity to form BCL10-nucleating filaments. Adapter protein that plays a key role in innate immune response against fungi by forming signaling complexes downstream of C-type lectin receptors. CARD9-mediated signals are essential for antifungal immunity against a subset of fungi from the phylum Ascomycota. Transduces signals in myeloid cells downstream of C-type lectin receptors CLEC7A (dectin-1), CLEC6A (dectin-2) and CLEC4E (Mincle), which detect pathogen-associated molecular pattern metabolites (PAMPs), such as fungal carbohydrates, and trigger CARD9 activation. Upon activation, CARD9 homooligomerizes to form a nucleating helical template that recruits BCL10 via CARD-CARD interaction, thereby promoting polymerization of BCL10 and subsequent recruitment of MALT1: this leads to activation of NF-kappa-B and MAP kinase p38 (MAPK11, MAPK12, MAPK13 and/or MAPK14) pathways which stimulate expression of genes encoding pro-inflammatory cytokines and chemokines. CARD9 signaling in antigen-presenting cells links innate sensing of fungi to the activation of adaptive immunity and provides a cytokine milieu that induces the development and subsequent of interleukin 17-producing T helper (Th17) cells. Also involved in activation of myeloid cells via classical ITAM-associated receptors and TLR: required for TLR-mediated activation of MAPK, while it is not required for TLR-induced activation of NF-kappa-B. CARD9 can also be engaged independently of BCL10: forms a complex with RASGRF1 downstream of C-type lectin receptors, which recruits and activates HRAS, leading to ERK activation and the production of cytokines. Acts as an important regulator of the intestinal commensal fungi (mycobiota) component of the gut microbiota. Plays an essential role in antifungal immunity against dissemination of gut fungi: acts by promoting induction of antifungal IgG antibodies response in CX3CR1(+) macrophages to confer protection against disseminated C.albicans or C.auris infection. Also mediates immunity against other pathogens, such as certain bacteria, viruses and parasites; CARD9 signaling is however redundant with other innate immune responses. In response to L.monocytogenes infection, required for the production of inflammatory cytokines activated by intracellular peptidoglycan: acts by connecting NOD2 recognition of peptidoglycan to downstream activation of MAP kinases (MAPK) without activating NF-kappa-B. The protein is Caspase recruitment domain-containing protein 9 of Homo sapiens (Human).